Reading from the N-terminus, the 594-residue chain is Proteasome-associated ATPase (594 aa).

Positions 1–12 are enriched in polar residues; it reads MTETSANKPENT. A disordered region spans residues 1 to 20; sequence MTETSANKPENTQAHEGRDY. Positions 18-71 form a coiled coil; that stretch reads RDYSVLERQFNVLRDKLRNVDRQLAAATQNNTKMTTTLQSAKAEILRLKSALEK. 282-287 is an ATP binding site; the sequence is GCGKTL. A docks into pockets in the proteasome alpha-ring region spans residues 593-594; that stretch reads YL.

The protein belongs to the AAA ATPase family. In terms of assembly, homohexamer. Assembles into a hexameric ring structure that caps the 20S proteasome core. Strongly interacts with the prokaryotic ubiquitin-like protein Pup through a hydrophobic interface; the interacting region of ARC lies in its N-terminal coiled-coil domain. There is one Pup binding site per ARC hexamer ring. Upon ATP-binding, the C-terminus of ARC interacts with the alpha-rings of the proteasome core, possibly by binding to the intersubunit pockets.

Its pathway is protein degradation; proteasomal Pup-dependent pathway. Its function is as follows. ATPase which is responsible for recognizing, binding, unfolding and translocation of pupylated proteins into the bacterial 20S proteasome core particle. May be essential for opening the gate of the 20S proteasome via an interaction with its C-terminus, thereby allowing substrate entry and access to the site of proteolysis. Thus, the C-termini of the proteasomal ATPase may function like a 'key in a lock' to induce gate opening and therefore regulate proteolysis. This Renibacterium salmoninarum (strain ATCC 33209 / DSM 20767 / JCM 11484 / NBRC 15589 / NCIMB 2235) protein is Proteasome-associated ATPase.